Reading from the N-terminus, the 86-residue chain is Photosystem I reaction center subunit PsaK 1 (86 aa).

A run of 2 helical transmembrane segments spans residues 14–34 (LSWS…AIAF) and 61–81 (AVLG…LGLA).

It belongs to the PsaG/PsaK family.

It localises to the cellular thylakoid membrane. The chain is Photosystem I reaction center subunit PsaK 1 (psaK1) from Synechocystis sp. (strain ATCC 27184 / PCC 6803 / Kazusa).